A 360-amino-acid polypeptide reads, in one-letter code: UDP-N-acetylglucosamine--N-acetylmuramyl-(pentapeptide) pyrophosphoryl-undecaprenol N-acetylglucosamine transferase (360 aa).

UDP-N-acetyl-alpha-D-glucosamine is bound by residues serine 198 and glutamine 289.

The protein belongs to the glycosyltransferase 28 family. MurG subfamily.

It is found in the cell membrane. It catalyses the reaction Mur2Ac(oyl-L-Ala-gamma-D-Glu-L-Lys-D-Ala-D-Ala)-di-trans,octa-cis-undecaprenyl diphosphate + UDP-N-acetyl-alpha-D-glucosamine = beta-D-GlcNAc-(1-&gt;4)-Mur2Ac(oyl-L-Ala-gamma-D-Glu-L-Lys-D-Ala-D-Ala)-di-trans,octa-cis-undecaprenyl diphosphate + UDP + H(+). It functions in the pathway cell wall biogenesis; peptidoglycan biosynthesis. In terms of biological role, cell wall formation. Catalyzes the transfer of a GlcNAc subunit on undecaprenyl-pyrophosphoryl-MurNAc-pentapeptide (lipid intermediate I) to form undecaprenyl-pyrophosphoryl-MurNAc-(pentapeptide)GlcNAc (lipid intermediate II). The protein is UDP-N-acetylglucosamine--N-acetylmuramyl-(pentapeptide) pyrophosphoryl-undecaprenol N-acetylglucosamine transferase of Streptococcus pyogenes serotype M12 (strain MGAS2096).